The following is a 312-amino-acid chain: Acetyl-coenzyme A carboxylase carboxyl transferase subunit alpha (312 aa).

Positions 36–286 (RLDKEVKSIY…KEYFLDALRT (251 aa)) constitute a CoA carboxyltransferase C-terminal domain.

The protein belongs to the AccA family. Acetyl-CoA carboxylase is a heterohexamer composed of biotin carboxyl carrier protein (AccB), biotin carboxylase (AccC) and two subunits each of ACCase subunit alpha (AccA) and ACCase subunit beta (AccD).

The protein localises to the cytoplasm. The catalysed reaction is N(6)-carboxybiotinyl-L-lysyl-[protein] + acetyl-CoA = N(6)-biotinyl-L-lysyl-[protein] + malonyl-CoA. It functions in the pathway lipid metabolism; malonyl-CoA biosynthesis; malonyl-CoA from acetyl-CoA: step 1/1. Component of the acetyl coenzyme A carboxylase (ACC) complex. First, biotin carboxylase catalyzes the carboxylation of biotin on its carrier protein (BCCP) and then the CO(2) group is transferred by the carboxyltransferase to acetyl-CoA to form malonyl-CoA. This Helicobacter pylori (strain Shi470) protein is Acetyl-coenzyme A carboxylase carboxyl transferase subunit alpha.